A 463-amino-acid polypeptide reads, in one-letter code: Fibrinogen beta chain (463 aa).

The span at 1–12 shows a compositional bias: acidic residues; sequence ASVEYDNEEDSP. Residues 1 to 56 are disordered; the sequence is ASVEYDNEEDSPQIDARAHRPLDKRQEAAPTLRPVAPPISGTGYQPRPPKQDKQAM. Residue Tyr5 is modified to Sulfotyrosine. Over residues 16–27 the composition is skewed to basic and acidic residues; the sequence is ARAHRPLDKRQE. 2 cysteine pairs are disulfide-bonded: Cys205–Cys289 and Cys215–Cys244. In terms of domain architecture, Fibrinogen C-terminal spans 206 to 461; the sequence is NIPVVSGREC…KMSMKIKPYF (256 aa). N-linked (GlcNAc...) asparagine glycosylation occurs at Asn367. Asp384, Asp386, and Trp388 together coordinate Ca(2+). A disulfide bond links Cys397 and Cys410.

Heterohexamer; disulfide linked. Contains 2 sets of 3 non-identical chains (alpha, beta and gamma). The 2 heterotrimers are in head to head conformation with the N-termini in a small central domain. In terms of processing, conversion of fibrinogen to fibrin is triggered by thrombin, which cleaves fibrinopeptides A and B from alpha and beta chains, and thus exposes the N-terminal polymerization sites responsible for the formation of the soft clot. The soft clot is converted into the hard clot by factor XIIIA which catalyzes the epsilon-(gamma-glutamyl)lysine cross-linking between gamma chains (stronger) and between alpha chains (weaker) of different monomers.

The protein localises to the secreted. Its function is as follows. Cleaved by the protease thrombin to yield monomers which, together with fibrinogen alpha (FGA) and fibrinogen gamma (FGG), polymerize to form an insoluble fibrin matrix. Fibrin has a major function in hemostasis as one of the primary components of blood clots. The protein is Fibrinogen beta chain (FGB) of Gallus gallus (Chicken).